A 604-amino-acid chain; its full sequence is MWLQQRIKVFPGLLSSSWARRVLAVSGFLVIIYWYIFSGSHYRSFWYSGKQWGVSGACLQAQIVQWKTLAEKGDVVMVSFPGEEIKLQGPAMVGNGQIIVDVGKNNLWVSSLSVLFHLTNYSPLTLFKNVGALAETHATAIFLKEGLIRTIRCLQVEASDSPRDCVTVREDHFAHRSRPHVYVQNIHITNPSDRVVTFDISSQKPLTGETFSTSLEKVQEKQFLLSSGRVSVEDGKIILVVVATKKLASRLQVSPKSEHDETVLSVVYASEPIDPAKLSDTFSKLRENAKKEMFELMHMKTEDLFHEHQQIWSDLIVSGIEMKKITDLHTPSRDTINITLYYMLSCSLAPLVDPALSNEEREKMESFLNYADHCFTGHSSMHAENLWPGSLSGITQLLQLWDLWKLTLQKRGCKSLVSAGAHGLMQGMLLSFGGLQFTENHLQFQSDPHVLHNSYSLRGIHYNKDLINLAVLLDQDEKPFLHVSVKFQDKLVKLYACEAGCLNEPVELTSEVRGHIFPVLITQPLTPLLYISTDLTHLQDLRHTLHLKEILAHEEHMAKQYRGLPFLFWFSVASLITLFHLFLFKLIYNEYCGPGAKPLFRSKV.

Residues 1–40 form the signal peptide; the sequence is MWLQQRIKVFPGLLSSSWARRVLAVSGFLVIIYWYIFSGS. The Extracellular portion of the chain corresponds to 41–563; that stretch reads HYRSFWYSGK…EEHMAKQYRG (523 aa). N-linked (GlcNAc...) asparagine glycosylation occurs at Asn337. Residues 564-584 traverse the membrane as a helical segment; it reads LPFLFWFSVASLITLFHLFLF. Topologically, residues 585-604 are cytoplasmic; the sequence is KLIYNEYCGPGAKPLFRSKV.

Its subcellular location is the membrane. This is an uncharacterized protein from Xenopus laevis (African clawed frog).